A 406-amino-acid chain; its full sequence is Tryptophan synthase beta chain (406 aa).

Lysine 99 bears the N6-(pyridoxal phosphate)lysine mark.

Belongs to the TrpB family. As to quaternary structure, tetramer of two alpha and two beta chains. The cofactor is pyridoxal 5'-phosphate.

It carries out the reaction (1S,2R)-1-C-(indol-3-yl)glycerol 3-phosphate + L-serine = D-glyceraldehyde 3-phosphate + L-tryptophan + H2O. The protein operates within amino-acid biosynthesis; L-tryptophan biosynthesis; L-tryptophan from chorismate: step 5/5. Its function is as follows. The beta subunit is responsible for the synthesis of L-tryptophan from indole and L-serine. The polypeptide is Tryptophan synthase beta chain (Sinorhizobium fredii (strain NBRC 101917 / NGR234)).